The following is a 97-amino-acid chain: Nuclear protein 2 (97 aa).

The disordered stretch occupies residues 76 to 97 (LLNGQRKRRQRQLHPKMRTRLT). Residues 80–97 (QRKRRQRQLHPKMRTRLT) show a composition bias toward basic residues.

Belongs to the NUPR family.

Its subcellular location is the nucleus. Functionally, acts as a transcriptional repressor by inhibiting gene expression at the NUPR1 promoter in a p53/TP53-dependent manner in cancer cells. Involved in the G1 cell cycle arrest, and in a decrease in cell viability and cell proliferation. Plays a role as a negative regulator of the protumoral factor NUPR1. The chain is Nuclear protein 2 from Homo sapiens (Human).